Consider the following 404-residue polypeptide: Tryptophan synthase beta chain (404 aa).

Lys-98 bears the N6-(pyridoxal phosphate)lysine mark.

Belongs to the TrpB family. In terms of assembly, tetramer of two alpha and two beta chains. Pyridoxal 5'-phosphate serves as cofactor.

It carries out the reaction (1S,2R)-1-C-(indol-3-yl)glycerol 3-phosphate + L-serine = D-glyceraldehyde 3-phosphate + L-tryptophan + H2O. It functions in the pathway amino-acid biosynthesis; L-tryptophan biosynthesis; L-tryptophan from chorismate: step 5/5. Its function is as follows. The beta subunit is responsible for the synthesis of L-tryptophan from indole and L-serine. The chain is Tryptophan synthase beta chain from Rhodopseudomonas palustris (strain BisA53).